The chain runs to 169 residues: Shikimate kinase (169 aa).

12–17 (GAGKST) serves as a coordination point for ATP. A Mg(2+)-binding site is contributed by Ser-16. The substrate site is built by Asp-34, Arg-58, and Gly-80. Arg-117 serves as a coordination point for ATP. Arg-136 lines the substrate pocket.

This sequence belongs to the shikimate kinase family. In terms of assembly, monomer. The cofactor is Mg(2+).

The protein localises to the cytoplasm. The enzyme catalyses shikimate + ATP = 3-phosphoshikimate + ADP + H(+). It functions in the pathway metabolic intermediate biosynthesis; chorismate biosynthesis; chorismate from D-erythrose 4-phosphate and phosphoenolpyruvate: step 5/7. Catalyzes the specific phosphorylation of the 3-hydroxyl group of shikimic acid using ATP as a cosubstrate. The protein is Shikimate kinase of Rhodococcus erythropolis (strain PR4 / NBRC 100887).